The following is a 257-amino-acid chain: Microfibril-associated glycoprotein 4 (257 aa).

The N-terminal stretch at 1–22 (MKALPALPLMLMLLSMPPPCAP) is a signal peptide. The short motif at 28 to 30 (RGD) is the Cell attachment site element. Positions 34 to 257 (KSCLQQPLDC…KRTEMKIRRA (224 aa)) constitute a Fibrinogen C-terminal domain. N-linked (GlcNAc...) asparagine glycans are attached at residues asparagine 89 and asparagine 139.

In terms of assembly, homodimer. Can also form higher oligomers. Interacts with FBN1, FBN2 and LOX. Interacts with COL1A1 in a Ca (2+)-dependent manner. Interacts with ELN in a Ca (2+)-dependent manner; this interaction promotes ELN self-assembly.

The protein localises to the secreted. It is found in the extracellular space. Its subcellular location is the extracellular matrix. Functionally, could be involved in calcium-dependent cell adhesion or intercellular interactions. May contribute to the elastic fiber assembly and/or maintenance. The polypeptide is Microfibril-associated glycoprotein 4 (Mfap4) (Mus musculus (Mouse)).